The following is a 439-amino-acid chain: Putrescine transporter PotE (439 aa).

The next 12 helical transmembrane spans lie at 10–30 (GVVQLTILTMVNMMGSGIIML), 40–60 (ISIISWLVTAVGSMALAWAFA), 91–111 (TYGVSLLIANVAIAISAVGYG), 114–134 (LLGASLSPVQIGLATIGVLWI), 152–172 (ITVWGVIIPVVGLCIIGWFWF), 186–206 (APFFSAVGSSIAMTLWAFLGL), 225–245 (IAVLGGTLGAAVIYIVSTNVI), 276–296 (VIMALMVMSCCGSLLGWQFTI), 321–341 (APVQGMLTIVIIQSGLALMTI), 354–374 (NLAVVTNIIPYILSMAALVII), 387–407 (VANFVAFVGAMYSFYALYSSG), and 410–430 (AMLYGSIVTFLGWTLYGLVSP).

The protein belongs to the amino acid-polyamine-organocation (APC) superfamily. Basic amino acid/polyamine antiporter (APA) (TC 2.A.3.2) family.

Its subcellular location is the cell inner membrane. It carries out the reaction putrescine(in) + H(+)(in) = putrescine(out) + H(+)(out). The catalysed reaction is putrescine(in) + L-ornithine(out) = putrescine(out) + L-ornithine(in). Catalyzes both the uptake and excretion of putrescine. The uptake of putrescine is dependent on the membrane potential and the excretion involves putrescine-ornithine antiporter activity. The protein is Putrescine transporter PotE of Escherichia coli O6:H1 (strain CFT073 / ATCC 700928 / UPEC).